Here is a 386-residue protein sequence, read N- to C-terminus: Alanine racemase (386 aa).

Lysine 38 functions as the Proton acceptor; specific for D-alanine in the catalytic mechanism. Lysine 38 is modified (N6-(pyridoxal phosphate)lysine). Residue arginine 136 coordinates substrate. Tyrosine 267 serves as the catalytic Proton acceptor; specific for L-alanine. Methionine 315 lines the substrate pocket.

It belongs to the alanine racemase family. The cofactor is pyridoxal 5'-phosphate.

The enzyme catalyses L-alanine = D-alanine. It functions in the pathway amino-acid biosynthesis; D-alanine biosynthesis; D-alanine from L-alanine: step 1/1. In terms of biological role, catalyzes the interconversion of L-alanine and D-alanine. May also act on other amino acids. The sequence is that of Alanine racemase (alr) from Clostridium perfringens (strain SM101 / Type A).